Here is a 375-residue protein sequence, read N- to C-terminus: Anhydro-N-acetylmuramic acid kinase 1 (375 aa).

Residue Gly-20–Asp-27 participates in ATP binding. Residues Ala-351–Ser-375 form a disordered region.

It belongs to the anhydro-N-acetylmuramic acid kinase family.

The catalysed reaction is 1,6-anhydro-N-acetyl-beta-muramate + ATP + H2O = N-acetyl-D-muramate 6-phosphate + ADP + H(+). The protein operates within amino-sugar metabolism; 1,6-anhydro-N-acetylmuramate degradation. It participates in cell wall biogenesis; peptidoglycan recycling. Catalyzes the specific phosphorylation of 1,6-anhydro-N-acetylmuramic acid (anhMurNAc) with the simultaneous cleavage of the 1,6-anhydro ring, generating MurNAc-6-P. Is required for the utilization of anhMurNAc either imported from the medium or derived from its own cell wall murein, and thus plays a role in cell wall recycling. The sequence is that of Anhydro-N-acetylmuramic acid kinase 1 from Jannaschia sp. (strain CCS1).